Here is a 4579-residue protein sequence, read N- to C-terminus: Sacsin (4579 aa).

One can recognise a Ubiquitin-like domain in the interval 9–84 (VPVTVLPGCV…FVNLQSKGLK (76 aa)). Residue Lys943 is modified to N6-acetyllysine. Ser1779 and Ser2511 each carry phosphoserine. At Thr2516 the chain carries Phosphothreonine. A Phosphoserine modification is found at Ser3435. Disordered regions lie at residues 4248–4273 (PEES…TPGL) and 4279–4298 (LFSG…PKKL). Residues 4254 to 4267 (SRDSAPSTPTSPTE) show a composition bias toward polar residues. Thr4261 bears the Phosphothreonine mark. Residue Ser4264 is modified to Phosphoserine. Residues 4288–4298 (TSSKHQSPKKL) show a composition bias toward basic residues. Residues 4306–4393 (ILKEVTSVVE…ASRFQSDKYS (88 aa)) enclose the J domain. The segment at 4405–4427 (ATSHKSERQQQNKEKCPPSAGQT) is disordered. Over residues 4406–4420 (TSHKSERQQQNKEKC) the composition is skewed to basic and acidic residues. The region spanning 4451-4567 (LRQARANFSA…MRVMECTACI (117 aa)) is the HEPN domain.

Highly expressed in the central nervous system. Also found in skeletal muscle and at low levels in pancreas.

It is found in the cytoplasm. In terms of biological role, co-chaperone which acts as a regulator of the Hsp70 chaperone machinery and may be involved in the processing of other ataxia-linked proteins. The protein is Sacsin (SACS) of Homo sapiens (Human).